The primary structure comprises 33 residues: Photosystem II reaction center protein Psb30 (33 aa).

A helical membrane pass occupies residues 5–25 (VIAQPIVLGLIVASGPLVIVS).

It belongs to the Psb30/Ycf12 family. As to quaternary structure, PSII is composed of 1 copy each of membrane proteins PsbA, PsbB, PsbC, PsbD, PsbE, PsbF, PsbH, PsbI, PsbJ, PsbK, PsbL, PsbM, PsbT, PsbX, PsbY, PsbZ, Psb30/Ycf12, peripheral proteins of the oxygen-evolving complex and a large number of cofactors. It forms dimeric complexes.

The protein localises to the plastid membrane. Its function is as follows. A core subunit of photosystem II (PSII), probably helps stabilize the reaction center. This is Photosystem II reaction center protein Psb30 from Aneura mirabilis (Parasitic liverwort).